We begin with the raw amino-acid sequence, 316 residues long: 4-hydroxy-3-methylbut-2-enyl diphosphate reductase (316 aa).

Cys12 is a [4Fe-4S] cluster binding site. (2E)-4-hydroxy-3-methylbut-2-enyl diphosphate-binding residues include His41 and His74. 2 residues coordinate dimethylallyl diphosphate: His41 and His74. His41 and His74 together coordinate isopentenyl diphosphate. Cys96 contributes to the [4Fe-4S] cluster binding site. Residue His124 participates in (2E)-4-hydroxy-3-methylbut-2-enyl diphosphate binding. Position 124 (His124) interacts with dimethylallyl diphosphate. His124 contributes to the isopentenyl diphosphate binding site. Glu126 (proton donor) is an active-site residue. Thr168 is a binding site for (2E)-4-hydroxy-3-methylbut-2-enyl diphosphate. Cys198 contributes to the [4Fe-4S] cluster binding site. Ser226, Ser227, Asn228, and Ser270 together coordinate (2E)-4-hydroxy-3-methylbut-2-enyl diphosphate. Dimethylallyl diphosphate-binding residues include Ser226, Ser227, Asn228, and Ser270. Residues Ser226, Ser227, Asn228, and Ser270 each coordinate isopentenyl diphosphate.

This sequence belongs to the IspH family. It depends on [4Fe-4S] cluster as a cofactor.

It carries out the reaction isopentenyl diphosphate + 2 oxidized [2Fe-2S]-[ferredoxin] + H2O = (2E)-4-hydroxy-3-methylbut-2-enyl diphosphate + 2 reduced [2Fe-2S]-[ferredoxin] + 2 H(+). The catalysed reaction is dimethylallyl diphosphate + 2 oxidized [2Fe-2S]-[ferredoxin] + H2O = (2E)-4-hydroxy-3-methylbut-2-enyl diphosphate + 2 reduced [2Fe-2S]-[ferredoxin] + 2 H(+). It functions in the pathway isoprenoid biosynthesis; dimethylallyl diphosphate biosynthesis; dimethylallyl diphosphate from (2E)-4-hydroxy-3-methylbutenyl diphosphate: step 1/1. It participates in isoprenoid biosynthesis; isopentenyl diphosphate biosynthesis via DXP pathway; isopentenyl diphosphate from 1-deoxy-D-xylulose 5-phosphate: step 6/6. Catalyzes the conversion of 1-hydroxy-2-methyl-2-(E)-butenyl 4-diphosphate (HMBPP) into a mixture of isopentenyl diphosphate (IPP) and dimethylallyl diphosphate (DMAPP). Acts in the terminal step of the DOXP/MEP pathway for isoprenoid precursor biosynthesis. The protein is 4-hydroxy-3-methylbut-2-enyl diphosphate reductase of Acinetobacter baylyi (strain ATCC 33305 / BD413 / ADP1).